A 369-amino-acid polypeptide reads, in one-letter code: GDSL esterase/lipase At5g42170 (369 aa).

The first 16 residues, 1 to 16, serve as a signal peptide directing secretion; it reads MSRLVYVIFLLVVVEG. N-linked (GlcNAc...) asparagine glycosylation is found at N28 and N45. S57 serves as the catalytic Nucleophile. 2 N-linked (GlcNAc...) asparagine glycosylation sites follow: N203 and N336. Catalysis depends on residues D344 and H347.

This sequence belongs to the 'GDSL' lipolytic enzyme family.

The protein resides in the secreted. The sequence is that of GDSL esterase/lipase At5g42170 from Arabidopsis thaliana (Mouse-ear cress).